The primary structure comprises 259 residues: Global transcriptional regulator CodY (259 aa).

Residues 1-155 are GAF domain; it reads MTLLEKTRKI…GGTVVGMEIL (155 aa). The segment at residues 203 to 222 is a DNA-binding region (H-T-H motif); that stretch reads ASKIADRVGITRSVIVNALR.

Belongs to the CodY family.

It is found in the cytoplasm. DNA-binding global transcriptional regulator which is involved in the adaptive response to starvation and acts by directly or indirectly controlling the expression of numerous genes in response to nutrient availability. During rapid exponential growth, CodY is highly active and represses genes whose products allow adaptation to nutrient depletion. This is Global transcriptional regulator CodY from Listeria welshimeri serovar 6b (strain ATCC 35897 / DSM 20650 / CCUG 15529 / CIP 8149 / NCTC 11857 / SLCC 5334 / V8).